Here is a 505-residue protein sequence, read N- to C-terminus: Photosystem II CP47 reaction center protein (505 aa).

Residues 1–19 (GLPWYRVHTVLINDPGRLI) are Cytoplasmic-facing. Residues histidine 8, histidine 22, histidine 25, histidine 99, and histidine 113 each contribute to the chlorophyll a site. Residues 20–35 (AAHLMHTALVAGWAGS) form a helical membrane-spanning segment. The Lumenal portion of the chain corresponds to 36–99 (MALYELATFD…WSFEGVALAH (64 aa)). Residues 100-114 (IVLSGLLFLAACWHW) form a helical membrane-spanning segment. The Cytoplasmic segment spans residues 115–138 (VYWDLELFRDPRTGEPALDLPKMF). Residues 139–155 (GIHLFLAGLLCFGFGAF) form a helical membrane-spanning segment. Histidine 141, histidine 156, histidine 200, histidine 201, and histidine 215 together coordinate chlorophyll a. Topologically, residues 156–201 (HLTGLFGPGMWVSDPYGLTGSVQPVAPEWGPDGFNPYNPGGVVAHH) are lumenal. Residues 202–217 (IAAGIVGIIAGLFHIL) traverse the membrane as a helical segment. Residues 218–235 (VRPPQRLYKALRMGNIET) are Cytoplasmic-facing. Residues 236–251 (VLSSSIAAVFFAAFVV) traverse the membrane as a helical segment. Topologically, residues 252–455 (AGTMWYGSAT…PRGWFTFAHA (204 aa)) are lumenal. The chlorophyll a site is built by histidine 454, histidine 465, and histidine 468. Residues 456-471 (VFALLFFFGHIWHGAR) traverse the membrane as a helical segment. Residues 472–505 (TLFRDVFSGIDPELSPEQVEWGFYQKVGDVTTRK) are Cytoplasmic-facing.

The protein belongs to the PsbB/PsbC family. PsbB subfamily. PSII is composed of 1 copy each of membrane proteins PsbA, PsbB, PsbC, PsbD, PsbE, PsbF, PsbH, PsbI, PsbJ, PsbK, PsbL, PsbM, PsbT, PsbX, PsbY, PsbZ, Psb30/Ycf12, peripheral proteins PsbO, CyanoQ (PsbQ), PsbU, PsbV and a large number of cofactors. It forms dimeric complexes. Binds multiple chlorophylls. PSII binds additional chlorophylls, carotenoids and specific lipids. is required as a cofactor.

It is found in the cellular thylakoid membrane. One of the components of the core complex of photosystem II (PSII). It binds chlorophyll and helps catalyze the primary light-induced photochemical processes of PSII. PSII is a light-driven water:plastoquinone oxidoreductase, using light energy to abstract electrons from H(2)O, generating O(2) and a proton gradient subsequently used for ATP formation. The protein is Photosystem II CP47 reaction center protein of Thermostichus vulcanus (Synechococcus vulcanus).